The following is a 411-amino-acid chain: Secretion apparatus protein BsaZ (411 aa).

Transmembrane regions (helical) follow at residues 28–48 (IVALIVIATGALAAPALVDLT), 80–100 (IAAPFVLLCAAAGALPSLVQS), 137–157 (ALLYVGVFALTVRVFAGLYHA), and 175–195 (IVLTVRLVLLFLLCALPVLIL). The disordered stretch occupies residues 341-411 (AANRGGPPPE…APARTGDQNA (71 aa)). A compositionally biased stretch (low complexity) spans 370–404 (DACADNAFPDDAPPGAAAPNAGSPDGPAPDGGAPA).

It belongs to the type III secretion exporter family.

The protein localises to the cell membrane. Functionally, part of the bsa type III secretion system, is involved in the intracellular replication of invading bacteria inside the host cell. Probably necessary for the lysis of the vacuole membrane and escape into the host cell cytoplasm. The sequence is that of Secretion apparatus protein BsaZ (bsaZ) from Burkholderia pseudomallei (strain 1026b).